We begin with the raw amino-acid sequence, 24 residues long: Caerulein precursor fragment BM1 (24 aa).

Expressed by the skin glands.

Its subcellular location is the secreted. Antimicrobial peptide. The sequence is that of Caerulein precursor fragment BM1 from Xenopus boumbaensis (Mawa clawed frog).